Reading from the N-terminus, the 118-residue chain is UPF0102 protein lpg2994 (118 aa).

The protein belongs to the UPF0102 family.

In Legionella pneumophila subsp. pneumophila (strain Philadelphia 1 / ATCC 33152 / DSM 7513), this protein is UPF0102 protein lpg2994.